Here is a 487-residue protein sequence, read N- to C-terminus: Ribulose bisphosphate carboxylase large chain (487 aa).

Substrate is bound by residues Asn-127 and Thr-177. Lys-179 serves as the catalytic Proton acceptor. Substrate is bound at residue Lys-181. Positions 205, 207, and 208 each coordinate Mg(2+). Position 205 is an N6-carboxylysine (Lys-205). His-297 (proton acceptor) is an active-site residue. Substrate-binding residues include Arg-298, His-330, and Ser-382.

It belongs to the RuBisCO large chain family. Type I subfamily. In terms of assembly, heterohexadecamer of 8 large chains and 8 small chains. It depends on Mg(2+) as a cofactor.

It catalyses the reaction 2 (2R)-3-phosphoglycerate + 2 H(+) = D-ribulose 1,5-bisphosphate + CO2 + H2O. It carries out the reaction D-ribulose 1,5-bisphosphate + O2 = 2-phosphoglycolate + (2R)-3-phosphoglycerate + 2 H(+). Functionally, ruBisCO catalyzes two reactions: the carboxylation of D-ribulose 1,5-bisphosphate, the primary event in carbon dioxide fixation, as well as the oxidative fragmentation of the pentose substrate. Both reactions occur simultaneously and in competition at the same active site. This is Ribulose bisphosphate carboxylase large chain from Paracoccus denitrificans (strain Pd 1222).